The following is a 132-amino-acid chain: Small ribosomal subunit protein uS8 (132 aa).

This sequence belongs to the universal ribosomal protein uS8 family. Part of the 30S ribosomal subunit. Contacts proteins S5 and S12.

One of the primary rRNA binding proteins, it binds directly to 16S rRNA central domain where it helps coordinate assembly of the platform of the 30S subunit. This chain is Small ribosomal subunit protein uS8, found in Bifidobacterium longum (strain NCC 2705).